The primary structure comprises 148 residues: Large ribosomal subunit protein bL9 (148 aa).

It belongs to the bacterial ribosomal protein bL9 family.

In terms of biological role, binds to the 23S rRNA. This Thermus thermophilus protein is Large ribosomal subunit protein bL9.